The chain runs to 92 residues: Small ribosomal subunit protein uS19 (92 aa).

The protein belongs to the universal ribosomal protein uS19 family.

Protein S19 forms a complex with S13 that binds strongly to the 16S ribosomal RNA. In Shewanella halifaxensis (strain HAW-EB4), this protein is Small ribosomal subunit protein uS19.